The following is a 101-amino-acid chain: Cilia- and flagella-associated protein 141 (101 aa).

In terms of assembly, microtubule inner protein component of sperm flagellar doublet microtubules. As to expression, expressed in airway epithelial cells.

The protein localises to the cytoplasm. Its subcellular location is the cytoskeleton. It is found in the cilium axoneme. The protein resides in the flagellum axoneme. Functionally, microtubule inner protein (MIP) part of the dynein-decorated doublet microtubules (DMTs) in cilia axoneme, which is required for motile cilia beating. This Homo sapiens (Human) protein is Cilia- and flagella-associated protein 141.